Here is a 204-residue protein sequence, read N- to C-terminus: Large ribosomal subunit protein eL15 (204 aa).

Belongs to the eukaryotic ribosomal protein eL15 family. Component of the large ribosomal subunit.

The protein resides in the cytoplasm. Component of the large ribosomal subunit. The ribosome is a large ribonucleoprotein complex responsible for the synthesis of proteins in the cell. The protein is Large ribosomal subunit protein eL15 (rpl15) of Siniperca knerii (Big-eye mandarin fish).